The following is a 257-amino-acid chain: MNPLVIKLGGVLLESDDAMKRLFEALVDYQKFYKRHVSVIHGGGRLIDNLMNKLSLPVKKKNGLRITPSEHINIITGALAGTANKTLLAWALKYNINAIGLCLADGGSVDVERLDENLGHVGKAIPGSPLFLKKLFKEGTIPIISSIGITKDGLLMNVNADLAATALATTLQANLILLSDISSILDGKGQRITEIDSIQAEKLIMQGIITNGMIVKVRAALEAARVLRRPVDIASWQNTEKLKLLFNGVNIGTRVYV.

Residues 43–44 (GG), arginine 65, and asparagine 157 each bind substrate. Residues 180–185 (DISSIL) and 208–210 (IIT) each bind ATP.

This sequence belongs to the acetylglutamate kinase family. ArgB subfamily. In terms of assembly, homodimer.

It localises to the cytoplasm. The catalysed reaction is N-acetyl-L-glutamate + ATP = N-acetyl-L-glutamyl 5-phosphate + ADP. It functions in the pathway amino-acid biosynthesis; L-arginine biosynthesis; N(2)-acetyl-L-ornithine from L-glutamate: step 2/4. Catalyzes the ATP-dependent phosphorylation of N-acetyl-L-glutamate. The protein is Acetylglutamate kinase of Buchnera aphidicola subsp. Acyrthosiphon pisum (strain 5A).